We begin with the raw amino-acid sequence, 488 residues long: Tyrosine-protein kinase Srms (488 aa).

Positions Pro-51–Pro-112 constitute an SH3 domain. Residues Trp-120–Cys-212 form the SH2 domain. A Protein kinase domain is found at Phe-230 to Pro-488. ATP-binding positions include Leu-236–Val-244 and Lys-258. Asp-350 acts as the Proton acceptor in catalysis. Phosphotyrosine; by autocatalysis is present on Tyr-380.

This sequence belongs to the protein kinase superfamily. Tyr protein kinase family. SRC subfamily. As to quaternary structure, interacts (via the SH2 and SH3 domains) with DOK1. Interacts with KHDRBS1/SAM68 and VIM. As to expression, highly expressed in most breast cancers (at protein level).

Its subcellular location is the cytoplasm. It carries out the reaction L-tyrosyl-[protein] + ATP = O-phospho-L-tyrosyl-[protein] + ADP + H(+). Functionally, non-receptor tyrosine-protein kinase which phosphorylates DOK1 on tyrosine residues. Also phosphorylates KHDRBS1/SAM68 and VIM on tyrosine residues. Phosphorylation of KHDRBS1 is EGF-dependent. Phosphorylates OTUB1, promoting deubiquitination of RPTOR. The protein is Tyrosine-protein kinase Srms (SRMS) of Homo sapiens (Human).